The primary structure comprises 444 residues: Docking protein 3 (444 aa).

Residues P7 to F123 enclose the PH domain. A Phosphoserine modification is found at S138. The region spanning E157–L261 is the IRS-type PTB domain. At S274 the chain carries Phosphoserine. The segment at L278–L299 is disordered. Phosphoserine is present on residues S308 and S314. A Phosphotyrosine modification is found at Y325. Residues G354 to A390 are disordered. A compositionally biased stretch (low complexity) spans G358 to P376. At S371 the chain carries Phosphoserine.

It belongs to the DOK family. Type A subfamily. In terms of assembly, on tyrosine phosphorylation, interacts with CSK and INPP5D/SHIP1 via their SH2 domains. Both Tyr-325 and Tyr-343 are required for interaction with INPP5D. Only Tyr-325 is required for interaction with CSK. Binds ABL1 through the PTB domain and in a kinase-dependent manner. Does not interact with RasGAP. Post-translationally, constitutively tyrosine-phosphorylated. On IL2 stimulation, phosphorylated on C-terminal tyrosine residues possibly by Src kinases. Can also be phosphorylated by ABL1 kinase. As to expression, predominantly expressed in bone marrow, spleen and lung. Low levels in heart, brain, liver, muscle, thymus, kidney and testis. Highly expressed in B-cells and macrophages.

It is found in the cytoplasm. Its subcellular location is the cell membrane. In terms of biological role, DOK proteins are enzymatically inert adaptor or scaffolding proteins. They provide a docking platform for the assembly of multimolecular signaling complexes. DOK3 is a negative regulator of JNK signaling in B-cells through interaction with INPP5D/SHIP1. May modulate ABL1 function. The polypeptide is Docking protein 3 (Dok3) (Mus musculus (Mouse)).